The following is a 514-amino-acid chain: piRNA biogenesis protein EXD1 (514 aa).

The 3'-5' exonuclease domain maps to 30–122 (LHAERTWMEK…HGKLCWLQVA (93 aa)). A disordered region spans residues 384-422 (SLNKQATNPQHLPPTEEGETSEDSSNKLICTKSKGSEDQ).

This sequence belongs to the EXD1 family. In terms of assembly, homodimer. Component of the PET complex, at least composed of EXD1, PIWIL2, TDRD12 and piRNAs.

The protein localises to the cytoplasm. RNA-binding component of the PET complex, a multiprotein complex required for the processing of piRNAs during spermatogenesis. The piRNA metabolic process mediates the repression of transposable elements during meiosis by forming complexes composed of piRNAs and Piwi proteins and governs the methylation and subsequent repression of transposable elements, preventing their mobilization, which is essential for the germline integrity. The PET complex is required during the secondary piRNAs metabolic process for the PIWIL2 slicing-triggered loading of PIWIL4 piRNAs. In the PET complex, EXD1 probably acts as an RNA adapter. EXD1 is an inactive exonuclease. The protein is piRNA biogenesis protein EXD1 (EXD1) of Homo sapiens (Human).